The sequence spans 128 residues: Large ribosomal subunit protein bL17 (128 aa).

It belongs to the bacterial ribosomal protein bL17 family. In terms of assembly, part of the 50S ribosomal subunit. Contacts protein L32.

In Streptococcus pyogenes serotype M5 (strain Manfredo), this protein is Large ribosomal subunit protein bL17.